Reading from the N-terminus, the 329-residue chain is ADP-L-glycero-D-manno-heptose-6-epimerase (329 aa).

NADP(+) is bound by residues 10-11, 31-32, lysine 38, lysine 53, 74-78, and asparagine 91; these read FI, DD, and QGACS. The active-site Proton acceptor is tyrosine 138. An NADP(+)-binding site is contributed by lysine 142. Asparagine 167 serves as a coordination point for substrate. Residues valine 168 and lysine 176 each coordinate NADP(+). Lysine 176 serves as the catalytic Proton acceptor. Substrate-binding positions include arginine 178, histidine 185, 199 to 202, arginine 212, and tyrosine 291; that span reads FAGW.

The protein belongs to the NAD(P)-dependent epimerase/dehydratase family. HldD subfamily. Homopentamer. NADP(+) serves as cofactor.

It carries out the reaction ADP-D-glycero-beta-D-manno-heptose = ADP-L-glycero-beta-D-manno-heptose. It participates in nucleotide-sugar biosynthesis; ADP-L-glycero-beta-D-manno-heptose biosynthesis; ADP-L-glycero-beta-D-manno-heptose from D-glycero-beta-D-manno-heptose 7-phosphate: step 4/4. It functions in the pathway bacterial outer membrane biogenesis; LPS core biosynthesis. Catalyzes the interconversion between ADP-D-glycero-beta-D-manno-heptose and ADP-L-glycero-beta-D-manno-heptose via an epimerization at carbon 6 of the heptose. This Bordetella parapertussis (strain 12822 / ATCC BAA-587 / NCTC 13253) protein is ADP-L-glycero-D-manno-heptose-6-epimerase.